The primary structure comprises 194 residues: MAKRRAAEPVTFHVPWKRLLLCDFAEQPPPPPLWIRPPGVAHAGQLLGVPEQHRKRKIDAGTMAEPSASPSKRRDSGDNSAPSGQEREDHGLETGDPPLPPPPVLPGPGEELPGARLPGGGGDDGAGRAGPPRGDWGVASRQHNEEFWQYNTFQYWRNPLPPIDLADIEDLSEDTLTEATLQGRNEGAEVDMES.

The tract at residues 45 to 138 is disordered; it reads QLLGVPEQHR…AGPPRGDWGV (94 aa). A phosphoserine mark is found at serine 69 and serine 76. Pro residues predominate over residues 97–106; the sequence is PPLPPPPVLP. The segment covering 107 to 116 has biased composition (low complexity); that stretch reads GPGEELPGAR. Residues 117–128 are compositionally biased toward gly residues; that stretch reads LPGGGGDDGAGR.

This is an uncharacterized protein from Homo sapiens (Human).